Consider the following 219-residue polypeptide: Ribose-5-phosphate isomerase A (219 aa).

Residues 28–31, 81–84, and 94–97 each bind substrate; these read TGST, DGAD, and KGGG. Glutamate 103 (proton acceptor) is an active-site residue. Lysine 121 is a binding site for substrate.

The protein belongs to the ribose 5-phosphate isomerase family. As to quaternary structure, homodimer.

The catalysed reaction is aldehydo-D-ribose 5-phosphate = D-ribulose 5-phosphate. The protein operates within carbohydrate degradation; pentose phosphate pathway; D-ribose 5-phosphate from D-ribulose 5-phosphate (non-oxidative stage): step 1/1. Its function is as follows. Catalyzes the reversible conversion of ribose-5-phosphate to ribulose 5-phosphate. The protein is Ribose-5-phosphate isomerase A of Erwinia tasmaniensis (strain DSM 17950 / CFBP 7177 / CIP 109463 / NCPPB 4357 / Et1/99).